Consider the following 434-residue polypeptide: Cytochrome P450 144 (434 aa).

Substrate-binding residues include D124 and H128. Positions 132, 326, 383, and 385 each coordinate heme.

This sequence belongs to the cytochrome P450 family. As to quaternary structure, monomer. Heme serves as cofactor.

The protein is Cytochrome P450 144 (cyp144) of Mycobacterium tuberculosis (strain CDC 1551 / Oshkosh).